Consider the following 217-residue polypeptide: Thiopurine S-methyltransferase (217 aa).

Positions 11, 46, 67, and 122 each coordinate S-adenosyl-L-methionine.

This sequence belongs to the class I-like SAM-binding methyltransferase superfamily. TPMT family.

It localises to the cytoplasm. It catalyses the reaction S-adenosyl-L-methionine + a thiopurine = S-adenosyl-L-homocysteine + a thiopurine S-methylether.. This Vibrio atlanticus (strain LGP32) (Vibrio splendidus (strain Mel32)) protein is Thiopurine S-methyltransferase.